Here is a 477-residue protein sequence, read N- to C-terminus: Putative WAS protein family homolog 4 (477 aa).

The WHD1 stretch occupies residues 1–180; the sequence is MSGVMCLKAS…EGLGGLPSNI (180 aa). 2 disordered regions span residues 310 to 420 and 434 to 477; these read QDGV…QGGH and KGIS…DWES. Residues 315–327 show a composition bias toward pro residues; it reads TPPPPPPPPPPAP. A VCA region spans residues 362–477; the sequence is QGAPREVVDP…QAEDEDDWES (116 aa). The region spanning 374–396 is the WH2 domain; the sequence is GWATLLESIRQAGGIGKAKLRSM. The segment covering 395 to 411 has biased composition (basic and acidic residues); that stretch reads SMKERKLEKQQQKEQEQ. Residues 437–449 are compositionally biased toward gly residues; it reads SGKGPGAGDGPGG.

The protein belongs to the WASH1 family. As to quaternary structure, interacts (via WHD1 region) with WASHC2C; the interaction is direct.

The protein localises to the early endosome membrane. Its subcellular location is the recycling endosome membrane. In terms of biological role, may act as a nucleation-promoting factor at the surface of endosomes, where it recruits and activates the Arp2/3 complex to induce actin polymerization, playing a key role in the fission of tubules that serve as transport intermediates during endosome sorting. In Homo sapiens (Human), this protein is Putative WAS protein family homolog 4 (WASH4P).